Reading from the N-terminus, the 32-residue chain is Cytochrome b6-f complex subunit 6 (32 aa).

The helical transmembrane segment at 6–26 threads the bilayer; the sequence is VFYIVFIALFFGIAVGIIFAI.

This sequence belongs to the PetL family. The 4 large subunits of the cytochrome b6-f complex are cytochrome b6, subunit IV (17 kDa polypeptide, PetD), cytochrome f and the Rieske protein, while the 4 small subunits are PetG, PetL, PetM and PetN. The complex functions as a dimer.

It is found in the cellular thylakoid membrane. In terms of biological role, component of the cytochrome b6-f complex, which mediates electron transfer between photosystem II (PSII) and photosystem I (PSI), cyclic electron flow around PSI, and state transitions. PetL is important for photoautotrophic growth as well as for electron transfer efficiency and stability of the cytochrome b6-f complex. This chain is Cytochrome b6-f complex subunit 6, found in Mastigocladus laminosus (Fischerella sp.).